A 433-amino-acid chain; its full sequence is MNSDLETRVLRKITLRIVPFIMLLYFVAFLDRVNIGFAALTMNEDLGFSSTVFGIGAGIFFVGYFLFEVPSNLILNKVGARIWIARVMITWGIVSGLMAFVQGTTSFYALRFLLGVAEAGFFPGIILYLSFWFPARRRAAVTAIFMAAAPLSTVLGSPISGALMEMHGFLGLAGWQWMFLIEAAPAVILGVVVLFYLTDRPEKAKWLSEDERNWLVKTMNAEQAAKGKASHSILAGLADIRVIALALVYFGTSAGLYTLGIWAPQIIKEFGLSSLQVGFINAVPGIFAVAAMVLWARHSDKTGERTWHVVGACLLAAVGLAFATGATSVFTVLIALTLVNIGISCSKPPLWSMPTLFLSGPAAAAGIATINSIGNLGGFVGPSMIGWIKDTTGSFAGGLYFVAGLLVVSAIVTLVLSRTAPENGGKVAPVQHR.

The next 11 helical transmembrane spans lie at 17–37, 47–67, 82–102, 113–133, 139–159, 177–197, 242–262, 275–295, 314–334, 350–370, and 395–415; these read IVPF…NIGF, GFSS…YFLF, IWIA…AFVQ, LLGV…SFWF, AAVT…GSPI, WMFL…LFYL, VIAL…LGIW, LQVG…MVLW, LLAA…TVLI, LWSM…IATI, and FAGG…VTLV.

The protein belongs to the major facilitator superfamily. Phthalate permease family.

Its subcellular location is the cell membrane. Functionally, component of the tartrate utilization system and may allow entry of tartrate and tartrate dehydrogenase. This chain is Putative tartrate transporter (ttuB), found in Agrobacterium vitis (Rhizobium vitis).